The following is a 166-amino-acid chain: UPF0134 protein MPN_138 (166 aa).

Belongs to the UPF0134 family.

The chain is UPF0134 protein MPN_138 from Mycoplasma pneumoniae (strain ATCC 29342 / M129 / Subtype 1) (Mycoplasmoides pneumoniae).